Reading from the N-terminus, the 36-residue chain is MERMVVDSKVMVGKPVIKGTRIPVDANVRIRNLQFY.

This is an uncharacterized protein from Archaeoglobus fulgidus (strain ATCC 49558 / DSM 4304 / JCM 9628 / NBRC 100126 / VC-16).